A 693-amino-acid chain; its full sequence is Cyclin-dependent kinase G-1 (693 aa).

Positions 1–10 (MAAGSHGGYR) are enriched in gly residues. 2 disordered regions span residues 1–148 (MAAG…ARDP) and 236–308 (KKKK…DDYP). Over residues 13-24 (EVAREREHDVGV) the composition is skewed to basic and acidic residues. Residues 26–39 (RRSKEHYHHRHPSR) are compositionally biased toward basic residues. 3 stretches are compositionally biased toward basic and acidic residues: residues 40–54 (HRDS…RSGG), 75–87 (RPSE…REPG), and 97–122 (RSGE…EEAK). Residues 268–284 (SVRSSSRSSDSGVLQGS) show a composition bias toward low complexity. A compositionally biased stretch (basic and acidic residues) spans 287–304 (RDLEVEKGDNIDVEKAAD). A Protein kinase domain is found at 349–640 (FERLNTINEG…AEDALNHEWF (292 aa)). ATP-binding positions include 355–363 (INEGTYGVV) and Lys-378. Thr-359 is subject to Phosphothreonine. At Tyr-360 the chain carries Phosphotyrosine. Residue Asp-473 is the Proton acceptor of the active site. Residue Ser-500 is modified to Phosphoserine. Position 506 is a phosphothreonine (Thr-506). A disordered region spans residues 664–693 (RFKKHMKSPDPLEEQWMKEQGNNGDRGLFG).

The protein belongs to the protein kinase superfamily. CMGC Ser/Thr protein kinase family. CDC2/CDKX subfamily.

The enzyme catalyses L-seryl-[protein] + ATP = O-phospho-L-seryl-[protein] + ADP + H(+). The catalysed reaction is L-threonyl-[protein] + ATP = O-phospho-L-threonyl-[protein] + ADP + H(+). It carries out the reaction [DNA-directed RNA polymerase] + ATP = phospho-[DNA-directed RNA polymerase] + ADP + H(+). In Oryza sativa subsp. indica (Rice), this protein is Cyclin-dependent kinase G-1 (CDKG-1).